Here is a 204-residue protein sequence, read N- to C-terminus: Glycerol-3-phosphate acyltransferase (204 aa).

Transmembrane regions (helical) follow at residues 12–32, 85–105, 117–137, 142–162, and 163–183; these read LVMGYLLGSLPSGYLAAHWLA, WQVAAGLAALAGHIWPVWLGW, MLLGISWPVGLACFGIFLTVL, IVSLSSIIAALSLPLLMILRF, and QGNSPPAYLAVAFAAMAMVVW.

Belongs to the PlsY family. In terms of assembly, probably interacts with PlsX.

It is found in the cell inner membrane. The catalysed reaction is an acyl phosphate + sn-glycerol 3-phosphate = a 1-acyl-sn-glycero-3-phosphate + phosphate. It functions in the pathway lipid metabolism; phospholipid metabolism. Its function is as follows. Catalyzes the transfer of an acyl group from acyl-phosphate (acyl-PO(4)) to glycerol-3-phosphate (G3P) to form lysophosphatidic acid (LPA). This enzyme utilizes acyl-phosphate as fatty acyl donor, but not acyl-CoA or acyl-ACP. This is Glycerol-3-phosphate acyltransferase from Prochlorococcus marinus (strain MIT 9313).